We begin with the raw amino-acid sequence, 253 residues long: Anamorsin homolog (253 aa).

The N-terminal SAM-like domain stretch occupies residues 4-129 (FKGLQKSLYI…ETGSSARLSF (126 aa)). Positions 130–161 (AKKNSSTLNVWKISGDDDELIDEEDLLDEVDK) are linker. [2Fe-2S] cluster contacts are provided by C172, C181, C184, and C186. Residues 172-186 (CSTTGKRKACKNCSC) form a fe-S binding site A region. [4Fe-4S] cluster contacts are provided by C214, C217, C225, and C228. Short sequence motifs (cx2C motif) lie at residues 214-217 (CGNC) and 225-228 (CSSC). The tract at residues 214-228 (CGNCYLGDAFRCSSC) is fe-S binding site B.

The protein belongs to the anamorsin family. In terms of assembly, monomer. [2Fe-2S] cluster serves as cofactor. The cofactor is [4Fe-4S] cluster.

The protein localises to the cytoplasm. It is found in the mitochondrion intermembrane space. In terms of biological role, component of the cytosolic iron-sulfur (Fe-S) protein assembly (CIA) machinery. Required for the maturation of extramitochondrial Fe-S proteins. Part of an electron transfer chain functioning in an early step of cytosolic Fe-S biogenesis, facilitating the de novo assembly of a [4Fe-4S] cluster on the cytosolic Fe-S scaffold complex. Electrons are transferred from NADPH via a FAD- and FMN-containing diflavin oxidoreductase. Together with the diflavin oxidoreductase, also required for the assembly of the diferric tyrosyl radical cofactor of ribonucleotide reductase (RNR), probably by providing electrons for reduction during radical cofactor maturation in the catalytic small subunit. The chain is Anamorsin homolog from Drosophila willistoni (Fruit fly).